Reading from the N-terminus, the 243-residue chain is Zinc import ATP-binding protein ZnuC (243 aa).

The region spanning 25-242 is the ABC transporter domain; that stretch reads LVVDSITLFY…AKFMSVFPEN (218 aa). 57 to 64 contacts ATP; that stretch reads GPNGGGKT.

This sequence belongs to the ABC transporter superfamily. Zinc importer (TC 3.A.1.15.5) family. The complex is composed of two ATP-binding proteins (ZnuC), two transmembrane proteins (ZnuB) and a solute-binding protein (ZnuA).

It is found in the cell inner membrane. It catalyses the reaction Zn(2+)(out) + ATP(in) + H2O(in) = Zn(2+)(in) + ADP(in) + phosphate(in) + H(+)(in). Part of the ABC transporter complex ZnuABC involved in zinc import. Responsible for energy coupling to the transport system. This is Zinc import ATP-binding protein ZnuC from Anaplasma phagocytophilum (strain HZ).